Here is a 126-residue protein sequence, read N- to C-terminus: Gas vesicle protein J (126 aa).

Belongs to the gas vesicle GvpA family. Interacts with GvpA.

The protein localises to the gas vesicle. Functionally, a minor component of the gas vesicle, might be involved in nucleating gas vesicle formation. Gas vesicles (GV) are hollow, gas filled proteinaceous nanostructures. During planktonic growth they allow positioning of the organism at a favorable depth for light or nutrient acquisition. In Pseudanabaena galeata (strain PCC 6901), this protein is Gas vesicle protein J.